The following is a 250-amino-acid chain: Kv channel-interacting protein 4 (250 aa).

The KIS stretch occupies residues 2-44 (NVRRVESISAQLEEASSTGGFLYAQNSTKRSIKERLMKLLPCS). Residues Ser17 and Ser56 each carry the phosphoserine modification. The region spanning 61–117 (LEMATVRHRPEALELLEAQSKFTKKELQILYRGFKNECPSGVVNEETFKEIYSQFFP) is the EF-hand 1; degenerate domain. EF-hand domains follow at residues 120 to 155 (DSTT…LLRG), 156 to 191 (TVQE…IYDM), and 204 to 239 (APRQ…DENI). The Ca(2+) site is built by Asp133, Asp135, Asn137, Asp144, Asp169, Asn171, Asp173, Tyr175, Glu180, Asp217, Asn219, Asp221, and Glu228. The interval 237–250 (ENIMRSMQLFENVI) is interaction with KCND2.

It belongs to the recoverin family. In terms of assembly, component of heteromultimeric potassium channels. Identified in potassium channel complexes containing KCND1, KCND2, KCND3, KCNIP1, KCNIP2, KCNIP3, KCNIP4, DPP6 and DPP10. Interacts with KCND2. Interacts with KCND3. Interacts with the C-terminus of PSEN2 and probably PSEN1.

It is found in the cell membrane. The protein localises to the cytoplasm. The protein resides in the peroxisome. Regulatory subunit of Kv4/D (Shal)-type voltage-gated rapidly inactivating A-type potassium channels. Modulates KCND2 channel density, inactivation kinetics and rate of recovery from inactivation in a calcium-dependent and isoform-specific manner. Modulates KCND3/Kv4.3 currents. Isoform 4 does not increase KCND2 expression at the cell membrane. Isoform 4 retains KCND3 in the endoplasmic reticulum and negatively regulates its expression at the cell membrane. This chain is Kv channel-interacting protein 4 (KCNIP4), found in Macaca fascicularis (Crab-eating macaque).